Reading from the N-terminus, the 232-residue chain is Large ribosomal subunit protein uL1 (232 aa).

Belongs to the universal ribosomal protein uL1 family. In terms of assembly, part of the 50S ribosomal subunit.

Its function is as follows. Binds directly to 23S rRNA. The L1 stalk is quite mobile in the ribosome, and is involved in E site tRNA release. Functionally, protein L1 is also a translational repressor protein, it controls the translation of the L11 operon by binding to its mRNA. This is Large ribosomal subunit protein uL1 from Azobacteroides pseudotrichonymphae genomovar. CFP2.